A 997-amino-acid chain; its full sequence is Burkholderia TALE-like protein 2 (997 aa).

The stretch at 19-50 is one Cryptic repeat -1 repeat; sequence LSPLERIKIEKHYGGGATLAFISNQHDELAQV. The Cryptic repeat 0 repeat unit spans residues 51–83; sequence LSRADILKIASYDCAAQALQAVLDCGPMLGKRG. Core repeat repeat units lie at residues 84–116, 117–147, 148–180, 181–213, 214–244, 245–277, 278–310, 311–343, 344–376, 377–409, 410–442, 443–475, 476–508, 509–539, 540–572, 573–605, 606–638, 639–671, 672–704, 705–737, 738–770, 771–803, 804–836, 837–869, 870–902, 903–935, and 936–967; these read FSRADIVRIAGNGGGAQALYSVLDVEPTLGKRG, FSQVDVVKIAGGGAQALHTVLEIGPTLGERG, FSRGDIVTIAGNNGGAQALQAVLELEPTLRERG, FNQADIVKIAGNGGGAQALQAVLDVEPALGKRG, FSRVDIAKIAGGGAQALQAVLGLEPTLRKRG, FHPTDIIKIAGNNGGAQALQAVLDLELMLRERG, FSQADIVKMASNIGGAQALQAVLNLEPALCERG, FSQPDIVKMAGNSGGAQALQAVLDLELAFRERG, FSQADIVKMASNIGGAQALQAVLELEPALHERG, FSQANIVKMAGNSGGAQALQAVLDLELVFRERG, FSQPEIVEMAGNIGGAQALHTVLDLELAFRERG, VRQADIVKIVGNNGGAQALQAVFELEPTLRERG, FNQATIVKIAANGGGAQALYSVLDVEPTLDKRG, FSRVDIVKIAGGGAQALHTAFELEPTLRKRG, FNPTDIVKIAGNKGGAQALQAVLELEPALRERG, FNQATIVKMAGNAGGAQALYSVLDVEPALRERG, FSQPEIVKIAGNIGGAQALHTVLELEPTLHKRG, FNPTDIVKIAGNSGGAQALQAVLELEPAFRERG, FGQPDIVKMASNIGGAQALQAVLELEPALRERG, FSQPDIVEMAGNIGGAQALQAVLELEPAFRERG, FSQSDIVKIAGNIGGAQALQAVLELEPTLRESD, FRQADIVNIAGNDGSTQALKAVIEHGPRLRQRG, FNRASIVKIAGNSGGAQALQAVLKHGPTLDERG, FNLTNIVKIAGNGGGAQALKAVIEHGPTLQQRG, FNLTDIVEMAGKGGGAQALKAVLEHGPTLRQRG, FNLIDIVEMASNTGGAQALKTVLEHGPTLRQRD, and LSLIDIVEIASNGGAQALKAVLKYGPVLMQAG. The interval 84–967 is buD domain; sequence FSRADIVRIA…KYGPVLMQAG (884 aa). ANK repeat units follow at residues 772–801, 805–834, 838–867, and 871–900; these read RQADIVNIAGNDGSTQALKAVIEHGPRLRQ, NRASIVKIAGNSGGAQALQAVLKHGPTLDE, NLTNIVKIAGNGGGAQALKAVIEHGPTLQQ, and NLTDIVEMAGKGGGAQALKAVLEHGPTLRQ. A Cryptic repeat +1 repeat occupies 968 to 997; the sequence is RSNEEIVHVAARRGGAGRIRKMVALLLERQ.

The protein belongs to the transcription activator-like effector (TALE) family. Bat subfamily.

Its function is as follows. Binds to DNA in a sequence-specific manner. This Mycetohabitans rhizoxinica (strain DSM 19002 / CIP 109453 / HKI 454) (Paraburkholderia rhizoxinica) protein is Burkholderia TALE-like protein 2.